A 479-amino-acid polypeptide reads, in one-letter code: Altronate oxidoreductase (479 aa).

18–29 (IIQFGEGNFLRA) contacts NAD(+).

Belongs to the mannitol dehydrogenase family. UxaB subfamily.

The catalysed reaction is D-altronate + NAD(+) = keto-D-tagaturonate + NADH + H(+). The protein operates within carbohydrate metabolism; pentose and glucuronate interconversion. The protein is Altronate oxidoreductase of Phocaeicola vulgatus (strain ATCC 8482 / DSM 1447 / JCM 5826 / CCUG 4940 / NBRC 14291 / NCTC 11154) (Bacteroides vulgatus).